The primary structure comprises 359 residues: Uracil-DNA glycosylase (359 aa).

The N-terminal 21 residues, M1–Q21, are a transit peptide targeting the mitochondrion. The active-site Proton acceptor is D162.

It belongs to the uracil-DNA glycosylase (UDG) superfamily. UNG family.

It localises to the mitochondrion. It is found in the nucleus. The enzyme catalyses Hydrolyzes single-stranded DNA or mismatched double-stranded DNA and polynucleotides, releasing free uracil.. In terms of biological role, excises uracil residues from the DNA which can arise as a result of misincorporation of dUMP residues by DNA polymerase or due to deamination of cytosine. Not involved in strand-directed mismatch repair. The sequence is that of Uracil-DNA glycosylase from Saccharomyces cerevisiae (strain ATCC 204508 / S288c) (Baker's yeast).